The following is a 650-amino-acid chain: Putative F-box protein R757 (650 aa).

The region spanning 7-53 (FSVMESLPTELAYHVLSFIDFNSVVTYRLCSQESNNFIKSMLVFFPI) is the F-box domain.

The sequence is that of Putative F-box protein R757 from Acanthamoeba polyphaga mimivirus (APMV).